The primary structure comprises 111 residues: Large ribosomal subunit protein bL21 (111 aa).

It belongs to the bacterial ribosomal protein bL21 family. Part of the 50S ribosomal subunit. Contacts protein L20.

This protein binds to 23S rRNA in the presence of protein L20. This chain is Large ribosomal subunit protein bL21, found in Thermosynechococcus vestitus (strain NIES-2133 / IAM M-273 / BP-1).